The chain runs to 633 residues: MGKVIGIDLGTTNSCVAVMDGKNSKVIENAEGMRTTPSIVAFSDDGERLVGQPAKRQAVTNPERTFFAVKRLVGRRYDDPMVEKDKKLVPYKIVKASNGDAWVEADGQTYSPSQVSAFILQKMKETAEAHLGQKVDQAVITVPAYFNDAQRQATKDAGKIAGLEVLRIINEPTAAALAYGLDKTKAGTIAVYDLGGGTFDVSILEIGDGVFEVKSTNGDTFLGGEDFDMRLVSYLADEFQKEQGINLRNDKLALQRLKEAAEKAKIELSSTTQTEINLPFITADQSGPKHLTMKLTRAKFEALVDDLVQKTIEPCRKALKDAGLTAGEIGEVVLVGGMTRMPKVQEVVKQLFGKEPHKGVNPDEVVAIGAAIQAGVLQGDVKDVLLLDVTPLSLGIETLGGVFTRIIERNTTIPTKKSQVFSTAEDNQNAVTIRVFQGEREMAADNKILGQFDLMGIPPAPRGMPQIEVTFDIDANGIVNVSAKDKATGKEQQIRIQASGGLSDSDIDKMVKDAEANAAEDKKRREAVDAKNHADALVHSTEKALAEHGSKVAEPERRAIEDALSDLRESLKSDDAEVIKAKTNTLAQASMKLGEAMYTQQAESDAAKHAAKDDIVDADFTEVDDDKNNKKSA.

The residue at position 198 (Thr198) is a Phosphothreonine; by autocatalysis.

Belongs to the heat shock protein 70 family.

In terms of biological role, acts as a chaperone. This chain is Chaperone protein DnaK, found in Rhodopseudomonas palustris (strain HaA2).